Here is a 199-residue protein sequence, read N- to C-terminus: Small ribosomal subunit protein uS4 (199 aa).

Positions alanine 91–alanine 153 constitute an S4 RNA-binding domain.

Belongs to the universal ribosomal protein uS4 family. In terms of assembly, part of the 30S ribosomal subunit. Contacts protein S5. The interaction surface between S4 and S5 is involved in control of translational fidelity.

Functionally, one of the primary rRNA binding proteins, it binds directly to 16S rRNA where it nucleates assembly of the body of the 30S subunit. With S5 and S12 plays an important role in translational accuracy. This Exiguobacterium sibiricum (strain DSM 17290 / CCUG 55495 / CIP 109462 / JCM 13490 / 255-15) protein is Small ribosomal subunit protein uS4.